We begin with the raw amino-acid sequence, 199 residues long: 3-isopropylmalate dehydratase small subunit (199 aa).

Belongs to the LeuD family. LeuD type 1 subfamily. Heterodimer of LeuC and LeuD.

The catalysed reaction is (2R,3S)-3-isopropylmalate = (2S)-2-isopropylmalate. It participates in amino-acid biosynthesis; L-leucine biosynthesis; L-leucine from 3-methyl-2-oxobutanoate: step 2/4. Its function is as follows. Catalyzes the isomerization between 2-isopropylmalate and 3-isopropylmalate, via the formation of 2-isopropylmaleate. In Aeromonas salmonicida (strain A449), this protein is 3-isopropylmalate dehydratase small subunit.